Reading from the N-terminus, the 702-residue chain is Elongation factor G (702 aa).

Residues 8–290 form the tr-type G domain; the sequence is SRYRNIGISA…AIIEFLPAPN (283 aa). Residues 17–24, 88–92, and 142–145 each bind GTP; these read AHIDAGKT, DTPGH, and NKMD.

It belongs to the TRAFAC class translation factor GTPase superfamily. Classic translation factor GTPase family. EF-G/EF-2 subfamily.

Its subcellular location is the cytoplasm. Catalyzes the GTP-dependent ribosomal translocation step during translation elongation. During this step, the ribosome changes from the pre-translocational (PRE) to the post-translocational (POST) state as the newly formed A-site-bound peptidyl-tRNA and P-site-bound deacylated tRNA move to the P and E sites, respectively. Catalyzes the coordinated movement of the two tRNA molecules, the mRNA and conformational changes in the ribosome. In Buchnera aphidicola subsp. Acyrthosiphon pisum (strain 5A), this protein is Elongation factor G.